The following is a 794-amino-acid chain: Elongator complex protein 2 (794 aa).

WD repeat units follow at residues 55 to 93, 98 to 140, 147 to 188, 203 to 244, 286 to 328, 337 to 376, 384 to 423, 433 to 472, 557 to 601, 604 to 643, 654 to 693, 705 to 751, and 759 to 794; these read EHTK…TTKS, GHTS…YVCF, DGFC…AGEG, GHED…KEQM, GHEG…IWLE, GNSV…PQLW, GHYG…GANP, IHGY…ENFR, GHGY…QIQK, GHQL…VSYQ, VHTR…KESS, LKNE…WKLL, and AHHL…IKLT.

It belongs to the WD repeat ELP2 family. As to quaternary structure, component of the elongator complex composed of Elp1, Elp2, Elp3, Elp4, Elp5 and Elp6. The elongator complex associates with and stabilizes microtubules; efficient interaction requires the full complex.

Its subcellular location is the cytoplasm. The protein resides in the nucleus. The protein localises to the cytoskeleton. It localises to the spindle. The protein operates within tRNA modification; 5-methoxycarbonylmethyl-2-thiouridine-tRNA biosynthesis. In terms of biological role, component of the elongator complex, which is required for multiple tRNA modifications, including mcm5U (5-methoxycarbonylmethyl uridine), mcm5s2U (5-methoxycarbonylmethyl-2-thiouridine), and ncm5U (5-carbamoylmethyl uridine). The elongator complex catalyzes the formation of carboxymethyluridine in the wobble base at position 34 in tRNAs. Binding by the elongator complex stabilizes microtubules and promotes their growth. This induces central spindle asymmetry, promoting polarized signaling endosome trafficking during asymmetric cell division and cell fate assignation of sensory organ precursor cells. Involved in the regulation of the STAT pathway. This chain is Elongator complex protein 2, found in Drosophila melanogaster (Fruit fly).